We begin with the raw amino-acid sequence, 39 residues long: MEQNPNPNNLPAELNRTSLYLGLLLVFVTAVLFTSYFFN.

A helical transmembrane segment spans residues 18 to 38 (SLYLGLLLVFVTAVLFTSYFF).

The protein belongs to the PsbL family. As to quaternary structure, PSII is composed of 1 copy each of membrane proteins PsbA, PsbB, PsbC, PsbD, PsbE, PsbF, PsbH, PsbI, PsbJ, PsbK, PsbL, PsbM, PsbT, PsbX, PsbY, Psb30/Ycf12, peripheral proteins PsbO, CyanoQ (PsbQ), PsbU, PsbV and a large number of cofactors. It forms dimeric complexes.

The protein resides in the cellular thylakoid membrane. Functionally, one of the components of the core complex of photosystem II (PSII). PSII is a light-driven water:plastoquinone oxidoreductase that uses light energy to abstract electrons from H(2)O, generating O(2) and a proton gradient subsequently used for ATP formation. It consists of a core antenna complex that captures photons, and an electron transfer chain that converts photonic excitation into a charge separation. This subunit is found at the monomer-monomer interface and is required for correct PSII assembly and/or dimerization. This is Photosystem II reaction center protein L from Prochlorococcus marinus (strain MIT 9313).